Consider the following 467-residue polypeptide: MASISSLGVGSNLPLDQLLTDLTKNEKGRLTPITKQQSANSAKLTAYGTLKSALEKFQTANTALNKADLFKSTVASSTTEDLKVSTTAGAAAGTYKINVTQLAAAQSLATKTTFATTKEQLGDTSVTSRTIKIEQPGRKEPLEIKLDKGDTSMEAIRDAINDADSGIAASIVKVKENEFQLVLTANSGTDNTMKITVEGDTKLNDLLAYDSTTNTGNMQELVKAENAKLNVNGIDIERQSNTVTDAPQGITLTLTKKVTDATVTVTKDDTKAKEAIKSWVDAYNSLVDTFSSLTKYTAVEPGEEASDKNGALLGDSVVRTIQTGIRAQFANSGSNSAFKTMAEIGITQDGTSGKLKIDDDKLTKVLKDNTAAARELLVGDGKETGITTKIATEVKSYLADDGIIDNAQDNVNATLKSLTKQYLSVSNSIDETVARYKAQFTQLDTMMSKLNNTSSYLTQQFTAMNKS.

Positions 411-439 (VNATLKSLTKQYLSVSNSIDETVARYKAQ) form a coiled coil.

It belongs to the FliD family. Homopentamer.

It is found in the secreted. The protein resides in the bacterial flagellum. Its function is as follows. Required for the morphogenesis and for the elongation of the flagellar filament by facilitating polymerization of the flagellin monomers at the tip of growing filament. Forms a capping structure, which prevents flagellin subunits (transported through the central channel of the flagellum) from leaking out without polymerization at the distal end. The sequence is that of Flagellar hook-associated protein 2 (fliD) from Salmonella typhimurium (strain LT2 / SGSC1412 / ATCC 700720).